The following is a 317-amino-acid chain: Beta-ketoacyl-[acyl-carrier-protein] synthase III (317 aa).

Catalysis depends on residues Cys-112 and His-244. The tract at residues 245–249 (QANLR) is ACP-binding. The active site involves Asn-274.

Belongs to the thiolase-like superfamily. FabH family. Homodimer.

It localises to the cytoplasm. The enzyme catalyses malonyl-[ACP] + acetyl-CoA + H(+) = 3-oxobutanoyl-[ACP] + CO2 + CoA. It participates in lipid metabolism; fatty acid biosynthesis. Functionally, catalyzes the condensation reaction of fatty acid synthesis by the addition to an acyl acceptor of two carbons from malonyl-ACP. Catalyzes the first condensation reaction which initiates fatty acid synthesis and may therefore play a role in governing the total rate of fatty acid production. Possesses both acetoacetyl-ACP synthase and acetyl transacylase activities. Its substrate specificity determines the biosynthesis of branched-chain and/or straight-chain of fatty acids. This chain is Beta-ketoacyl-[acyl-carrier-protein] synthase III, found in Shigella boydii serotype 4 (strain Sb227).